We begin with the raw amino-acid sequence, 314 residues long: Deoxymugineic acid synthase 1 (314 aa).

The tract at residues 1-21 is disordered; the sequence is MGAGDRTVAGMPRIGMGTAVQ. Aspartate 44 contacts NADP(+). Tyrosine 49 serves as the catalytic Proton donor. Histidine 112 provides a ligand contact to substrate. Residues 158 to 159, glutamine 180, 258 to 266, and 273 to 281 each bind NADP(+); these read AN, FDEARMREN, and ELTEEERRR.

The protein belongs to the aldo/keto reductase family.

The catalysed reaction is 2'-deoxymugineate + NAD(+) = 3''-deamino-3''-oxonicotianamine + NADH + H(+). The enzyme catalyses 2'-deoxymugineate + NADP(+) = 3''-deamino-3''-oxonicotianamine + NADPH + H(+). The protein operates within siderophore biosynthesis. Its function is as follows. Catalyzes the reduction of a 3''-keto intermediate during the biosynthesis of 2'-deoxymugineic acid (DMA) from L-Met. Involved in the formation of phytosiderophores (MAs) belonging to the mugineic acid family and required to acquire iron. The protein is Deoxymugineic acid synthase 1 of Hordeum vulgare (Barley).